We begin with the raw amino-acid sequence, 414 residues long: CinA-like protein (414 aa).

This sequence belongs to the CinA family.

This chain is CinA-like protein, found in Acidobacterium capsulatum (strain ATCC 51196 / DSM 11244 / BCRC 80197 / JCM 7670 / NBRC 15755 / NCIMB 13165 / 161).